The following is a 382-amino-acid chain: Protein RecA (382 aa).

79 to 86 (GPESSGKT) is an ATP binding site. A disordered region spans residues 362–382 (ATKSAAKGSEVQADVKTKGAA).

This sequence belongs to the RecA family.

It is found in the cytoplasm. Can catalyze the hydrolysis of ATP in the presence of single-stranded DNA, the ATP-dependent uptake of single-stranded DNA by duplex DNA, and the ATP-dependent hybridization of homologous single-stranded DNAs. It interacts with LexA causing its activation and leading to its autocatalytic cleavage. This chain is Protein RecA, found in Synechococcus sp. (strain WH7803).